The chain runs to 498 residues: Probable malate:quinone oxidoreductase 2 (498 aa).

The protein belongs to the MQO family. Requires FAD as cofactor.

It carries out the reaction (S)-malate + a quinone = a quinol + oxaloacetate. The protein operates within carbohydrate metabolism; tricarboxylic acid cycle; oxaloacetate from (S)-malate (quinone route): step 1/1. The protein is Probable malate:quinone oxidoreductase 2 of Staphylococcus aureus (strain MW2).